Consider the following 232-residue polypeptide: 2,3,4,5-tetrahydropyridine-2,6-dicarboxylate N-acetyltransferase (232 aa).

The protein belongs to the transferase hexapeptide repeat family. DapH subfamily.

The catalysed reaction is (S)-2,3,4,5-tetrahydrodipicolinate + acetyl-CoA + H2O = L-2-acetamido-6-oxoheptanedioate + CoA. It participates in amino-acid biosynthesis; L-lysine biosynthesis via DAP pathway; LL-2,6-diaminopimelate from (S)-tetrahydrodipicolinate (acetylase route): step 1/3. Its function is as follows. Catalyzes the transfer of an acetyl group from acetyl-CoA to tetrahydrodipicolinate. The sequence is that of 2,3,4,5-tetrahydropyridine-2,6-dicarboxylate N-acetyltransferase from Streptococcus pneumoniae serotype 4 (strain ATCC BAA-334 / TIGR4).